The primary structure comprises 284 residues: Kynurenine formamidase avaC (284 aa).

The HGGXW motif lies at histidine 47 to tryptophan 51. Serine 130 acts as the Nucleophile in catalysis.

This sequence belongs to the kynurenine formamidase family.

It carries out the reaction N-formyl-L-kynurenine + H2O = L-kynurenine + formate + H(+). It participates in secondary metabolite metabolism. Its function is as follows. Kynurenine formamidase; part of the cluster that mediates the biosynthesis of a highly modified cyclo-arginine-tryptophan dipeptide (cRW). Within the pathway, avaC catalyzes the deformylation of the cyclo-Arg-formylkynurenine iketopiperazine (DKP), produced by the FAD-dependent monooxygenase avaB. The first step of the pathway is perfornmed by the arginine-containing cyclodipeptide synthase (RCPDS) avaA that acts as the scaffold-generating enzyme and is responsible for formation of the cyclo-Arg-Trp (cRW) diketopiperazine. AvaB then acts as a multifunctional flavoenzyme that is responsible for generating the cyclo-Arg-formylkynurenine DKP, which can be deformylated by avaC. AvaB then further catalyzes an additional N-oxidation followed by cyclization and dehydration. The next step is an N-acetylation of the guanidine group catalyzed by the arginine N-acetyltransferase avaD. The roles of the additional enzymes identified within the ava cluster still have to be determined. The sequence is that of Kynurenine formamidase avaC from Aspergillus versicolor.